A 75-amino-acid polypeptide reads, in one-letter code: uncharacterized protein (75 aa).

This is an uncharacterized protein from Bovine papillomavirus type 3.